Here is a 1080-residue protein sequence, read N- to C-terminus: Phycobiliprotein ApcE (1080 aa).

The phycobilin-like 1 stretch occupies residues 18 to 76 (QTLAVATITQAEQQDRFLGTGELNELATYFASGAKRLEIAQTLTENSEIIVSRAANRIF). Residues 77–144 (VGGSPMSFLE…GPTPPGFRPI (68 aa)) form a phycobilin-like loop region. Positions 145–237 (NVARYGPSNM…YMDVLLTEFK (93 aa)) are phycobilin-like 2. C195 is a (2R,3E)-phycocyanobilin binding site. 4 PBS-linker domains span residues 252–432 (DQQG…FRKV), 514–693 (LGPK…QKQE), 710–888 (PDIQ…KQND), and 922–1080 (STSA…SLGN). The disordered stretch occupies residues 906 to 930 (GTSSSGRNGFTDLGRSSTSAQGQLG).

This sequence belongs to the phycobilisome linker protein family. As to quaternary structure, phycobilisomes of this organism are composed of a two cylinder core, from which six rods radiate. The core is mainly composed of allophycocyanin alpha and beta chains, and of three minor components: the allophycocyanin alpha-B chain, a 18.3 kDa polypeptide, and the anchor polypeptide L-CM. Contains one covalently linked bilin chromophore. This protein autochromophorylates.

It localises to the cellular thylakoid membrane. In terms of biological role, this protein is postulated to act both as terminal energy acceptor (by its phycobilin-like domains) and as a linker polypeptide (by its repeats and arms) that stabilizes the phycobilisome core architecture. Its function is as follows. Has intrinsic bilin lyase activity. The chain is Phycobiliprotein ApcE (apcE) from Microchaete diplosiphon (Fremyella diplosiphon).